Reading from the N-terminus, the 75-residue chain is Sperm-specific protein PL-I (75 aa).

One can recognise an H15 domain in the interval 2-74 (GSSGMMSMVA…GSAGWVLVPK (73 aa)).

It belongs to the histone H1/H5 family. In terms of tissue distribution, sperm.

It is found in the nucleus. The protein localises to the chromosome. Functionally, linker histones are implicated in chromatin remodeling and/or transcriptional regulation during spermiogenesis, the process of spermatid maturation into spermatozoa. The chain is Sperm-specific protein PL-I from Spisula solidissima (Atlantic surf-clam).